The sequence spans 516 residues: Maintenance of mitochondrial morphology protein 1 (516 aa).

Residues 1–43 lie on the Lumenal side of the membrane; the sequence is MAGSTSASLQTPYFPSSTQINPVRVDHTLPLPPAQPSLSFTQG. Residues 44–64 traverse the membrane as a helical segment; it reads LLVGQLSVVLLIGAFIKFFIF. The Cytoplasmic segment spans residues 65-516; the sequence is GEAPPPPSRG…GSMPDTVTET (452 aa). Disordered regions lie at residues 70–118, 295–349, 420–466, and 485–516; these read PPSR…SSST, TSDQ…SKHG, RTGL…IDRG, and GGHQNQSGRDGGRGGNEQFAMPGSMPDTVTET. Polar residues-rich tracts occupy residues 74 to 96, 105 to 118, and 295 to 312; these read GLSNRTSTHPRSYSINAASTDSS, STSNILRPVPSSST, and TSDQTMSPIPTPHDTTSE. The region spanning 151–412 is the SMP-LTD domain; sequence QPESLDWFNV…EPRVQVVGLP (262 aa). Over residues 449–460 the composition is skewed to gly residues; the sequence is GVSGGGGGGGSM.

This sequence belongs to the MMM1 family. Homodimer. Component of the ER-mitochondria encounter structure (ERMES) or MDM complex, composed of MMM1, MDM10, MDM12 and MDM34. An MMM1 homodimer associates with one molecule of MDM12 on each side in a pairwise head-to-tail manner, and the SMP-LTD domains of MMM1 and MDM12 generate a continuous hydrophobic tunnel for phospholipid trafficking.

It is found in the endoplasmic reticulum membrane. Component of the ERMES/MDM complex, which serves as a molecular tether to connect the endoplasmic reticulum (ER) and mitochondria. Components of this complex are involved in the control of mitochondrial shape and protein biogenesis, and function in nonvesicular lipid trafficking between the ER and mitochondria. The MDM12-MMM1 subcomplex functions in the major beta-barrel assembly pathway that is responsible for biogenesis of all outer membrane beta-barrel proteins, and acts in a late step after the SAM complex. The MDM10-MDM12-MMM1 subcomplex further acts in the TOM40-specific pathway after the action of the MDM12-MMM1 complex. Essential for establishing and maintaining the structure of mitochondria and maintenance of mtDNA nucleoids. The polypeptide is Maintenance of mitochondrial morphology protein 1 (Paracoccidioides brasiliensis (strain Pb18)).